We begin with the raw amino-acid sequence, 279 residues long: Undecaprenyl-diphosphatase (279 aa).

7 helical membrane-spanning segments follow: residues 10 to 30 (FICF…FLPI), 48 to 68 (LGVS…IYYF), 96 to 116 (LFIY…LIKL), 128 to 148 (GLFS…LSEI), 203 to 223 (SFLV…FSLF), 229 to 249 (IDII…IFAI), and 259 to 279 (NNTL…LTTL).

This sequence belongs to the UppP family.

The protein resides in the cell inner membrane. The catalysed reaction is di-trans,octa-cis-undecaprenyl diphosphate + H2O = di-trans,octa-cis-undecaprenyl phosphate + phosphate + H(+). Functionally, catalyzes the dephosphorylation of undecaprenyl diphosphate (UPP). Confers resistance to bacitracin. The polypeptide is Undecaprenyl-diphosphatase (Prochlorococcus marinus (strain NATL1A)).